Here is a 318-residue protein sequence, read N- to C-terminus: Aldehyde oxidoreductase FAD-binding subunit PaoB (318 aa).

In terms of domain architecture, FAD-binding PCMH-type spans 1 to 223 (MKAFTYERVN…VAVTLPPPLG (223 aa)). FAD is bound by residues 26 to 34 (KFIAGGTNL) and Thr-108. The [4Fe-4S] cluster site is built by Cys-119, Cys-129, Cys-138, and Cys-157. Residues Asp-164, Ile-213, and Lys-230 each contribute to the FAD site.

Heterotrimer composed of PaoA, PaoB and PaoC. FAD is required as a cofactor. Requires [4Fe-4S] cluster as cofactor.

It is found in the periplasm. The enzyme catalyses an aldehyde + A + H2O = a carboxylate + AH2 + H(+). The complex requires PaoD for activity. Oxidizes aldehydes to the corresponding carboxylic acids with a preference for aromatic aldehydes. It might play a role in the detoxification of aldehydes to avoid cell damage. This Escherichia coli (strain K12) protein is Aldehyde oxidoreductase FAD-binding subunit PaoB.